Here is a 145-residue protein sequence, read N- to C-terminus: Small ribosomal subunit protein bS6 (145 aa).

A compositionally biased stretch (basic and acidic residues) spans 113 to 132 (ENMKKNERKAPKEPVKKDEE). The interval 113-145 (ENMKKNERKAPKEPVKKDEEENKESEEEITSEE) is disordered. Residues 133–145 (ENKESEEEITSEE) show a composition bias toward acidic residues.

The protein belongs to the bacterial ribosomal protein bS6 family.

In terms of biological role, binds together with bS18 to 16S ribosomal RNA. This is Small ribosomal subunit protein bS6 from Campylobacter hominis (strain ATCC BAA-381 / DSM 21671 / CCUG 45161 / LMG 19568 / NCTC 13146 / CH001A).